Reading from the N-terminus, the 397-residue chain is Purine nucleoside transport protein NupG (397 aa).

The next 11 membrane-spanning stretches (helical) occupy residues 1-21 (MYFL…FLCS), 32-52 (IITL…TKVG), 62-82 (FFTW…PSVM), 97-117 (IIFI…PWLI), 133-153 (LESF…LAVI), 165-185 (LLTF…GSYL), 187-207 (MVPA…ALII), 242-262 (MLVG…YVAL), 282-302 (IFAY…HDAM), 335-355 (VAVA…GMIY), and 377-397 (LLVS…LFVW).

It belongs to the concentrative nucleoside transporter (CNT) (TC 2.A.41) family.

The protein resides in the cell membrane. In terms of biological role, involved in the uptake of the purine ribonucleosides inosine and guanosine. The protein is Purine nucleoside transport protein NupG (nupG) of Bacillus subtilis (strain 168).